Reading from the N-terminus, the 320-residue chain is o-succinylbenzoate synthase (320 aa).

Residue Lys-133 is the Proton donor of the active site. Residues Asp-161, Glu-190, and Asp-213 each contribute to the Mg(2+) site. The Proton acceptor role is filled by Lys-235.

This sequence belongs to the mandelate racemase/muconate lactonizing enzyme family. MenC type 1 subfamily. It depends on a divalent metal cation as a cofactor.

It carries out the reaction (1R,6R)-6-hydroxy-2-succinyl-cyclohexa-2,4-diene-1-carboxylate = 2-succinylbenzoate + H2O. The protein operates within quinol/quinone metabolism; 1,4-dihydroxy-2-naphthoate biosynthesis; 1,4-dihydroxy-2-naphthoate from chorismate: step 4/7. It participates in quinol/quinone metabolism; menaquinone biosynthesis. In terms of biological role, converts 2-succinyl-6-hydroxy-2,4-cyclohexadiene-1-carboxylate (SHCHC) to 2-succinylbenzoate (OSB). This Escherichia coli O81 (strain ED1a) protein is o-succinylbenzoate synthase.